Consider the following 387-residue polypeptide: Queuine tRNA-ribosyltransferase (387 aa).

Asp93 acts as the Proton acceptor in catalysis. Substrate contacts are provided by residues 93 to 97 (DSGGF), Asp147, Gln190, and Gly217. The interval 248–254 (GVGTPDD) is RNA binding. The active-site Nucleophile is Asp267. The tract at residues 272 to 276 (TRAGR) is RNA binding; important for wobble base 34 recognition. 4 residues coordinate Zn(2+): Cys305, Cys307, Cys310, and His336.

It belongs to the queuine tRNA-ribosyltransferase family. Homodimer. Within each dimer, one monomer is responsible for RNA recognition and catalysis, while the other monomer binds to the replacement base PreQ1. Zn(2+) serves as cofactor.

The enzyme catalyses 7-aminomethyl-7-carbaguanine + guanosine(34) in tRNA = 7-aminomethyl-7-carbaguanosine(34) in tRNA + guanine. Its pathway is tRNA modification; tRNA-queuosine biosynthesis. Functionally, catalyzes the base-exchange of a guanine (G) residue with the queuine precursor 7-aminomethyl-7-deazaguanine (PreQ1) at position 34 (anticodon wobble position) in tRNAs with GU(N) anticodons (tRNA-Asp, -Asn, -His and -Tyr). Catalysis occurs through a double-displacement mechanism. The nucleophile active site attacks the C1' of nucleotide 34 to detach the guanine base from the RNA, forming a covalent enzyme-RNA intermediate. The proton acceptor active site deprotonates the incoming PreQ1, allowing a nucleophilic attack on the C1' of the ribose to form the product. After dissociation, two additional enzymatic reactions on the tRNA convert PreQ1 to queuine (Q), resulting in the hypermodified nucleoside queuosine (7-(((4,5-cis-dihydroxy-2-cyclopenten-1-yl)amino)methyl)-7-deazaguanosine). The polypeptide is Queuine tRNA-ribosyltransferase (Gluconacetobacter diazotrophicus (strain ATCC 49037 / DSM 5601 / CCUG 37298 / CIP 103539 / LMG 7603 / PAl5)).